The following is a 548-amino-acid chain: Chaperonin GroEL (548 aa).

ATP-binding positions include 30-33 (TLGP), Lys51, 87-91 (DGTTT), Gly415, 478-480 (NAA), and Asp494.

It belongs to the chaperonin (HSP60) family. As to quaternary structure, forms a cylinder of 14 subunits composed of two heptameric rings stacked back-to-back. Interacts with the co-chaperonin GroES.

Its subcellular location is the cytoplasm. The enzyme catalyses ATP + H2O + a folded polypeptide = ADP + phosphate + an unfolded polypeptide.. Together with its co-chaperonin GroES, plays an essential role in assisting protein folding. The GroEL-GroES system forms a nano-cage that allows encapsulation of the non-native substrate proteins and provides a physical environment optimized to promote and accelerate protein folding. This is Chaperonin GroEL from Janthinobacterium sp. (strain Marseille) (Minibacterium massiliensis).